The following is a 212-amino-acid chain: Large ribosomal subunit protein uL3 (212 aa).

A disordered region spans residues 136-155; the sequence is THGNSLSHRSNGSIGQNQTP. Gln153 is subject to N5-methylglutamine.

This sequence belongs to the universal ribosomal protein uL3 family. As to quaternary structure, part of the 50S ribosomal subunit. Forms a cluster with proteins L14 and L19. Methylated by PrmB.

One of the primary rRNA binding proteins, it binds directly near the 3'-end of the 23S rRNA, where it nucleates assembly of the 50S subunit. The protein is Large ribosomal subunit protein uL3 of Shewanella baltica (strain OS223).